The following is a 287-amino-acid chain: mRNA-capping enzyme regulatory subunit OPG124 (287 aa).

It belongs to the orthopoxvirus mRNA-capping enzyme regulatory subunit family. In terms of assembly, interacts with the catalytic subunit OPG113.

It is found in the virion. Its function is as follows. Regulatory subunit of the mRNA cap enzyme which stabilizes the catalytic subunit and enhances its methyltransferase activity through an allosteric mechanism. Heterodimeric mRNA capping enzyme catalyzes the linkage of a N7-methyl-guanosine moiety to the first transcribed nucleotide (cap 0 structure), whereas the methyltransferase OPG102 is responsible for a second methylation at the 2'-O position of the ribose (cap 1 structure). Also involved in early viral gene transcription termination and intermediate viral gene transcription initiation. Early gene transcription termination requires the termination factor VTF, the DNA-dependent ATPase NPH-I/OPG123 and the RAP94/OPG109 subunit of the viral RNA polymerase, as well as the presence of a specific termination motif. Binds, together with RAP94/OPG109, to the termination motif 5'-UUUUUNU-3' in the nascent early mRNA. The sequence is that of mRNA-capping enzyme regulatory subunit OPG124 (OPG124) from Bos taurus (Bovine).